A 369-amino-acid chain; its full sequence is Putative cyclin-F1-1 (369 aa).

Residues 328–350 form a disordered region; the sequence is AQHHLESKPAGAAGVGINSSGDD.

It belongs to the cyclin family. Cyclin F subfamily.

This is Putative cyclin-F1-1 (CYCF1-1) from Oryza sativa subsp. japonica (Rice).